The following is a 57-amino-acid chain: Large ribosomal subunit protein bL32 (57 aa).

Positions 1 to 16 (MAVQKSRKTRSKRGMR) are enriched in basic residues. Positions 1 to 45 (MAVQKSRKTRSKRGMRRSHDALTAPAQLSVDATSGETHRRHHMTA) are disordered.

The protein belongs to the bacterial ribosomal protein bL32 family.

In Psychromonas ingrahamii (strain DSM 17664 / CCUG 51855 / 37), this protein is Large ribosomal subunit protein bL32.